Reading from the N-terminus, the 389-residue chain is Chaperone protein DnaJ (389 aa).

One can recognise a J domain in the interval 5-79 (KRDYYEVLGI…RKLYDQFGHE (75 aa)). A CR-type zinc finger spans residues 151–234 (GCNKTIKYER…CRSNKYTVTN (84 aa)). Zn(2+) is bound by residues Cys164, Cys167, Cys182, Cys185, Cys208, Cys211, Cys222, and Cys225. CXXCXGXG motif repeat units follow at residues 164-171 (CHSCNGFG), 182-189 (CKDCNGNG), 208-215 (CSTCNGQG), and 222-229 (CKTCRSNK).

It belongs to the DnaJ family. In terms of assembly, homodimer. Requires Zn(2+) as cofactor.

The protein resides in the cytoplasm. Participates actively in the response to hyperosmotic and heat shock by preventing the aggregation of stress-denatured proteins and by disaggregating proteins, also in an autonomous, DnaK-independent fashion. Unfolded proteins bind initially to DnaJ; upon interaction with the DnaJ-bound protein, DnaK hydrolyzes its bound ATP, resulting in the formation of a stable complex. GrpE releases ADP from DnaK; ATP binding to DnaK triggers the release of the substrate protein, thus completing the reaction cycle. Several rounds of ATP-dependent interactions between DnaJ, DnaK and GrpE are required for fully efficient folding. Also involved, together with DnaK and GrpE, in the DNA replication of plasmids through activation of initiation proteins. The chain is Chaperone protein DnaJ from Mycoplasma genitalium (strain ATCC 33530 / DSM 19775 / NCTC 10195 / G37) (Mycoplasmoides genitalium).